The chain runs to 181 residues: Adenine phosphoribosyltransferase (181 aa).

Belongs to the purine/pyrimidine phosphoribosyltransferase family. Homodimer.

The protein localises to the cytoplasm. It carries out the reaction AMP + diphosphate = 5-phospho-alpha-D-ribose 1-diphosphate + adenine. It participates in purine metabolism; AMP biosynthesis via salvage pathway; AMP from adenine: step 1/1. Catalyzes a salvage reaction resulting in the formation of AMP, that is energically less costly than de novo synthesis. This is Adenine phosphoribosyltransferase from Brucella anthropi (strain ATCC 49188 / DSM 6882 / CCUG 24695 / JCM 21032 / LMG 3331 / NBRC 15819 / NCTC 12168 / Alc 37) (Ochrobactrum anthropi).